The following is a 177-amino-acid chain: MSRIGKKPVELPTGVTASVSGQTIEVKGPKATRSFTATDDVTLKVEDNVITIEPRGKSKRARQQWGMSRTMVGNLVTGVTNGFKKELEIQGVGYRAQMQGNTLKLNLGLSHEVNYEVPAGVTVTCPKVTEIVIEGTDEQLVGQVAANIRDWRKPEPYKGKGIRYKGEFIFRKEGKKK.

It belongs to the universal ribosomal protein uL6 family. In terms of assembly, part of the 50S ribosomal subunit.

Functionally, this protein binds to the 23S rRNA, and is important in its secondary structure. It is located near the subunit interface in the base of the L7/L12 stalk, and near the tRNA binding site of the peptidyltransferase center. The sequence is that of Large ribosomal subunit protein uL6 from Dinoroseobacter shibae (strain DSM 16493 / NCIMB 14021 / DFL 12).